The chain runs to 1063 residues: Probable hemoglobin and hemoglobin-haptoglobin-binding protein 1 (1063 aa).

An N-terminal signal peptide occupies residues 1-24 (MTNFKFSLLACSIAFALNASIAYA). Repeat copies occupy residues 26–29 (QPTN), 30–33 (QPTN), 34–37 (QPTN), 38–41 (QPTN), 42–45 (QPTN), 46–49 (QPTN), and 50–53 (QPTN). Residues 26–53 (QPTNQPTNQPTNQPTNQPTNQPTNQPTN) form a 7 X 4 AA tandem repeats of Q-P-T-N region. The span at 28–55 (TNQPTNQPTNQPTNQPTNQPTNQPTNQN) shows a compositional bias: low complexity. The interval 28–57 (TNQPTNQPTNQPTNQPTNQPTNQPTNQNSN) is disordered. The TonB box motif lies at 63–70 (EQINVSGS). The 135-residue stretch at 66–200 (NVSGSSENIN…LGGSVIFETK (135 aa)) folds into the TBDR plug domain. The TBDR beta-barrel domain maps to 208–1063 (DKDYYLSYKR…NYRMSVQFEF (856 aa)). The TonB C-terminal box signature appears at 1046-1063 (NRFYAPGRNYRMSVQFEF).

Belongs to the TonB-dependent receptor family. Hemoglobin/haptoglobin binding protein subfamily.

It is found in the cell outer membrane. Its function is as follows. Acts as a receptor for hemoglobin or the hemoglobin/haptoglobin complex of the human host and is required for heme uptake. This is Probable hemoglobin and hemoglobin-haptoglobin-binding protein 1 from Haemophilus influenzae (strain ATCC 51907 / DSM 11121 / KW20 / Rd).